The sequence spans 718 residues: Catalase-peroxidase (718 aa).

Residues 98-219 constitute a cross-link (tryptophyl-tyrosyl-methioninium (Trp-Tyr) (with M-245)); sequence WHAAGTYRMG…LAATEMGLIY (122 aa). Residue His-99 is the Proton acceptor of the active site. The tryptophyl-tyrosyl-methioninium (Tyr-Met) (with W-98) cross-link spans 219–245; the sequence is YVNPEGPQASGDPRSAAPFIRATFGNM. His-260 is a heme b binding site.

Belongs to the peroxidase family. Peroxidase/catalase subfamily. In terms of assembly, homodimer or homotetramer. The cofactor is heme b. Formation of the three residue Trp-Tyr-Met cross-link is important for the catalase, but not the peroxidase activity of the enzyme.

It carries out the reaction H2O2 + AH2 = A + 2 H2O. The enzyme catalyses 2 H2O2 = O2 + 2 H2O. Its function is as follows. Bifunctional enzyme with both catalase and broad-spectrum peroxidase activity. The sequence is that of Catalase-peroxidase from Acinetobacter baumannii (strain ATCC 17978 / DSM 105126 / CIP 53.77 / LMG 1025 / NCDC KC755 / 5377).